We begin with the raw amino-acid sequence, 658 residues long: Protein cueball (658 aa).

Residues 1 to 543 lie on the Extracellular side of the membrane; sequence MSGVTARMEN…SYCKNSFNRT (543 aa). N-linked (GlcNAc...) asparagine glycosylation is found at N25 and N122. LDL-receptor class B repeat units follow at residues 100–142, 152–195, and 196–241; these read RKLY…NHDL, RHLY…DHYS, and NRIY…NSRY. 3 EGF-like domains span residues 352–384, 387–422, and 458–495; these read EIPICNNYCVHGKCVIGRDNRPTCECDAKFEGE, DRSKCDGFCLNSGNCSFSDATATCACPKNFSGKRCE, and EEYTCNNYCLNDGKCVLNNETMLVECRCGAEYTGKRCE. Disulfide bonds link C356–C365, C360–C375, C391–C401, C395–C410, C412–C421, C462–C472, C466–C483, and C485–C494. N400 and N415 each carry an N-linked (GlcNAc...) asparagine glycan. An N-linked (GlcNAc...) asparagine glycan is attached at N476. Residue N541 is glycosylated (N-linked (GlcNAc...) asparagine). The helical transmembrane segment at 544-564 threads the bilayer; sequence VVYASLAFAASLFILMVILLI. The Cytoplasmic portion of the chain corresponds to 565-658; that stretch reads VRRFYEEGRP…SCAGGDKNLP (94 aa).

It belongs to the cueball family.

The protein localises to the cell membrane. Its function is as follows. Has a role in spermatogenesis and oogenesis. In Culex quinquefasciatus (Southern house mosquito), this protein is Protein cueball.